Consider the following 66-residue polypeptide: Large ribosomal subunit protein bL31 (66 aa).

Zn(2+) is bound by residues cysteine 16, cysteine 18, cysteine 36, and cysteine 39.

This sequence belongs to the bacterial ribosomal protein bL31 family. Type A subfamily. In terms of assembly, part of the 50S ribosomal subunit. It depends on Zn(2+) as a cofactor.

Binds the 23S rRNA. This chain is Large ribosomal subunit protein bL31, found in Trichlorobacter lovleyi (strain ATCC BAA-1151 / DSM 17278 / SZ) (Geobacter lovleyi).